The following is a 386-amino-acid chain: Homoserine O-succinyltransferase (386 aa).

The 310-residue stretch at 49 to 358 (NAILICHALS…DAEQGHDSFL (310 aa)) folds into the AB hydrolase-1 domain. Ser156 acts as the Nucleophile in catalysis. A substrate-binding site is contributed by Arg226. Residues Asp321 and His354 contribute to the active site. Asp355 lines the substrate pocket.

It belongs to the AB hydrolase superfamily. MetX family. As to quaternary structure, homodimer.

It is found in the cytoplasm. The enzyme catalyses L-homoserine + succinyl-CoA = O-succinyl-L-homoserine + CoA. It participates in amino-acid biosynthesis; L-methionine biosynthesis via de novo pathway; O-succinyl-L-homoserine from L-homoserine: step 1/1. In terms of biological role, transfers a succinyl group from succinyl-CoA to L-homoserine, forming succinyl-L-homoserine. In Acinetobacter baumannii (strain ACICU), this protein is Homoserine O-succinyltransferase.